Here is a 543-residue protein sequence, read N- to C-terminus: Light-independent protochlorophyllide reductase subunit B (543 aa).

Asp36 contacts [4Fe-4S] cluster. Residue Asp287 is the Proton donor of the active site. 422 to 423 (GL) is a substrate binding site.

This sequence belongs to the ChlB/BchB/BchZ family. In terms of assembly, protochlorophyllide reductase is composed of three subunits; BchL, BchN and BchB. Forms a heterotetramer of two BchB and two BchN subunits. [4Fe-4S] cluster is required as a cofactor.

The enzyme catalyses chlorophyllide a + oxidized 2[4Fe-4S]-[ferredoxin] + 2 ADP + 2 phosphate = protochlorophyllide a + reduced 2[4Fe-4S]-[ferredoxin] + 2 ATP + 2 H2O. The protein operates within porphyrin-containing compound metabolism; bacteriochlorophyll biosynthesis (light-independent). In terms of biological role, component of the dark-operative protochlorophyllide reductase (DPOR) that uses Mg-ATP and reduced ferredoxin to reduce ring D of protochlorophyllide (Pchlide) to form chlorophyllide a (Chlide). This reaction is light-independent. The NB-protein (BchN-BchB) is the catalytic component of the complex. The sequence is that of Light-independent protochlorophyllide reductase subunit B from Rubrivivax gelatinosus (strain NBRC 100245 / IL144).